The following is a 493-amino-acid chain: Cysteine sulfinic acid decarboxylase (493 aa).

N6-(pyridoxal phosphate)lysine is present on Lys-305.

This sequence belongs to the group II decarboxylase family. Homodimer. Pyridoxal 5'-phosphate is required as a cofactor. In terms of tissue distribution, expressed in liver and brain. Also expressed in both astrocytes and neurons, but lower levels are expressed in astrocytes.

It catalyses the reaction L-aspartate + H(+) = beta-alanine + CO2. It carries out the reaction 3-sulfino-L-alanine + H(+) = hypotaurine + CO2. The enzyme catalyses L-cysteate + H(+) = taurine + CO2. Its pathway is organosulfur biosynthesis; taurine biosynthesis; hypotaurine from L-cysteine: step 2/2. Functionally, catalyzes the decarboxylation of L-aspartate, 3-sulfino-L-alanine (cysteine sulfinic acid), and L-cysteate to beta-alanine, hypotaurine and taurine, respectively. The preferred substrate is 3-sulfino-L-alanine. Does not exhibit any decarboxylation activity toward glutamate. In Homo sapiens (Human), this protein is Cysteine sulfinic acid decarboxylase (CSAD).